Here is a 305-residue protein sequence, read N- to C-terminus: Cytochrome c biogenesis protein CcsA (305 aa).

Helical transmembrane passes span 11–31 (GLGF…FWAV), 37–57 (TGIV…QLVL), 63–83 (GHFP…ACTL), 96–116 (IVAA…SFAL), 141–161 (VIMV…AVLL), 212–232 (TITV…VWAN), 246–263 (TWAL…HTRL), and 275–295 (VAVV…LLGI).

This sequence belongs to the CcmF/CycK/Ccl1/NrfE/CcsA family. In terms of assembly, may interact with ccs1.

The protein resides in the cellular thylakoid membrane. Its function is as follows. Required during biogenesis of c-type cytochromes (cytochrome c6 and cytochrome f) at the step of heme attachment. The chain is Cytochrome c biogenesis protein CcsA from Parasynechococcus marenigrum (strain WH8102).